Consider the following 165-residue polypeptide: Mid1-interacting protein 1-like (165 aa).

Positions 46 to 67 (DQESHASVSHNNNNNNEPSFPN) are disordered.

It belongs to the SPOT14 family.

It localises to the nucleus. The protein localises to the cytoplasm. The protein resides in the cytoskeleton. In terms of biological role, involved in stabilization of microtubules. May play a role in the regulation of lipogenesis. The chain is Mid1-interacting protein 1-like from Danio rerio (Zebrafish).